The sequence spans 360 residues: Phospho-N-acetylmuramoyl-pentapeptide-transferase (360 aa).

10 helical membrane passes run 21-41 (YITV…LWIG), 73-93 (TMGG…WANL), 94-114 (ANPY…IGFV), 132-152 (WKYF…YWLG), 168-188 (IMPQ…VGTG), 199-219 (GLAI…AWAT), 239-259 (VVVF…FNTY), 263-283 (VFMG…VAIL), 288-308 (FLLV…ILQV), and 338-358 (VIIR…VTLK).

Belongs to the glycosyltransferase 4 family. MraY subfamily. It depends on Mg(2+) as a cofactor.

It localises to the cell inner membrane. It catalyses the reaction UDP-N-acetyl-alpha-D-muramoyl-L-alanyl-gamma-D-glutamyl-meso-2,6-diaminopimeloyl-D-alanyl-D-alanine + di-trans,octa-cis-undecaprenyl phosphate = di-trans,octa-cis-undecaprenyl diphospho-N-acetyl-alpha-D-muramoyl-L-alanyl-D-glutamyl-meso-2,6-diaminopimeloyl-D-alanyl-D-alanine + UMP. It participates in cell wall biogenesis; peptidoglycan biosynthesis. Catalyzes the initial step of the lipid cycle reactions in the biosynthesis of the cell wall peptidoglycan: transfers peptidoglycan precursor phospho-MurNAc-pentapeptide from UDP-MurNAc-pentapeptide onto the lipid carrier undecaprenyl phosphate, yielding undecaprenyl-pyrophosphoryl-MurNAc-pentapeptide, known as lipid I. This Haemophilus influenzae (strain ATCC 51907 / DSM 11121 / KW20 / Rd) protein is Phospho-N-acetylmuramoyl-pentapeptide-transferase.